The primary structure comprises 314 residues: Curved DNA-binding protein (314 aa).

One can recognise a J domain in the interval 5–69 (DYYKILDVEP…EKRAEYDELR (65 aa)). Residues 73–92 (RQGRPFQTPPGWQSRAGAGA) are disordered.

The protein localises to the cytoplasm. Its subcellular location is the nucleoid. DNA-binding protein that preferentially recognizes a curved DNA sequence. It is probably a functional analog of DnaJ; displays overlapping activities with DnaJ, but functions under different conditions, probably acting as a molecular chaperone in an adaptive response to environmental stresses other than heat shock. Lacks autonomous chaperone activity; binds native substrates and targets them for recognition by DnaK. Its activity is inhibited by the binding of CbpM. This chain is Curved DNA-binding protein, found in Pseudomonas syringae pv. tomato (strain ATCC BAA-871 / DC3000).